Consider the following 429-residue polypeptide: Argininosuccinate lyase (429 aa).

It belongs to the lyase 1 family. Argininosuccinate lyase subfamily.

The protein localises to the cytoplasm. It catalyses the reaction 2-(N(omega)-L-arginino)succinate = fumarate + L-arginine. Its pathway is amino-acid biosynthesis; L-arginine biosynthesis; L-arginine from L-ornithine and carbamoyl phosphate: step 3/3. The chain is Argininosuccinate lyase from Pyrobaculum arsenaticum (strain DSM 13514 / JCM 11321 / PZ6).